A 387-amino-acid chain; its full sequence is Patatin-12 (387 aa).

A signal peptide spans 1–23; sequence MATTKSFLILIVMILATTSSTFA. Residues 32–230 enclose the PNPLA domain; the sequence is LSIDGGGIKG…TVGDPALLSL (199 aa). A GXGXXG motif is present at residues 36–41; sequence GGGIKG. The GXSXG signature appears at 75 to 79; it reads GTSTG. Serine 77 serves as the catalytic Nucleophile. N-linked (GlcNAc...) asparagine glycosylation occurs at asparagine 115. The Proton acceptor role is filled by aspartate 216. The DGA/G signature appears at 216 to 218; sequence DGG. Positions 322–385 form a coiled coil; sequence ENALTGTTTE…DRKKLRANKA (64 aa).

It belongs to the patatin family. Tuber.

It is found in the vacuole. Probable lipolytic acyl hydrolase (LAH), an activity which is thought to be involved in the response of tubers to pathogens. The polypeptide is Patatin-12 (Solanum tuberosum (Potato)).